A 181-amino-acid chain; its full sequence is Regulator of G-protein signaling 10 (181 aa).

The disordered stretch occupies residues 1–32 (MFNRAVSRLSRKRPPSDIHDSDGSSSSSHQSL). A compositionally biased stretch (low complexity) spans 23–32 (GSSSSSHQSL). A phosphoserine mark is found at Ser-24 and Ser-41. The RGS domain occupies 41-156 (SLENLLEDPE…LKSDLFLKHK (116 aa)). The S-palmitoyl cysteine moiety is linked to residue Cys-74. The segment at 158 to 181 (TEEEEEDLPDAQTAAKRASRIYNT) is disordered. A Phosphoserine modification is found at Ser-176.

As to quaternary structure, interacts with GNAZ, GNAI1 and GNAI3. Associates specifically with the activated, GTP-bound forms of GNAZ and GNAI3.

It localises to the cytoplasm. The protein localises to the cytosol. Its subcellular location is the nucleus. In terms of biological role, regulates G protein-coupled receptor signaling cascades, including signaling downstream of the muscarinic acetylcholine receptor CHRM2. Inhibits signal transduction by increasing the GTPase activity of G protein alpha subunits, thereby driving them into their inactive GDP-bound form. Modulates the activity of potassium channels that are activated in response to CHRM2 signaling. Activity on GNAZ is inhibited by palmitoylation of the G-protein. The chain is Regulator of G-protein signaling 10 (RGS10) from Homo sapiens (Human).